Here is a 619-residue protein sequence, read N- to C-terminus: DNA mismatch repair protein MutL (619 aa).

The segment covering 368-378 (VDEPKQVDEPK) has biased composition (basic and acidic residues). Residues 368-403 (VDEPKQVDEPKQSSPVQEPKEEIPSFLPTVESKQND) are disordered.

The protein belongs to the DNA mismatch repair MutL/HexB family.

Its function is as follows. This protein is involved in the repair of mismatches in DNA. It is required for dam-dependent methyl-directed DNA mismatch repair. May act as a 'molecular matchmaker', a protein that promotes the formation of a stable complex between two or more DNA-binding proteins in an ATP-dependent manner without itself being part of a final effector complex. The chain is DNA mismatch repair protein MutL from Geobacillus sp. (strain WCH70).